A 660-amino-acid chain; its full sequence is Oligopeptide-binding protein AliA (660 aa).

Residues 1-22 (MKSSKLFALAGVTLLAATTLAA) form the signal peptide. The N-palmitoyl cysteine moiety is linked to residue Cys-23. Residue Cys-23 is the site of S-diacylglycerol cysteine attachment. The segment at 638-660 (EKWMKEKEESNKKAQEDLAKHVK) is disordered.

It belongs to the bacterial solute-binding protein 5 family.

It localises to the cell membrane. Part of the binding-protein-dependent transport system for oligopeptides; probably an oligopeptide binding protein. This is Oligopeptide-binding protein AliA (aliA) from Streptococcus pneumoniae serotype 4 (strain ATCC BAA-334 / TIGR4).